The primary structure comprises 130 residues: Small ribosomal subunit protein uS8 (130 aa).

This sequence belongs to the universal ribosomal protein uS8 family. Part of the 30S ribosomal subunit. Contacts proteins S5 and S12.

Functionally, one of the primary rRNA binding proteins, it binds directly to 16S rRNA central domain where it helps coordinate assembly of the platform of the 30S subunit. In Vibrio vulnificus (strain CMCP6), this protein is Small ribosomal subunit protein uS8.